The sequence spans 245 residues: 1-(5-phosphoribosyl)-5-[(5-phosphoribosylamino)methylideneamino] imidazole-4-carboxamide isomerase (245 aa).

The active-site Proton acceptor is the Asp8. The active-site Proton donor is the Asp129.

This sequence belongs to the HisA/HisF family.

It is found in the cytoplasm. It carries out the reaction 1-(5-phospho-beta-D-ribosyl)-5-[(5-phospho-beta-D-ribosylamino)methylideneamino]imidazole-4-carboxamide = 5-[(5-phospho-1-deoxy-D-ribulos-1-ylimino)methylamino]-1-(5-phospho-beta-D-ribosyl)imidazole-4-carboxamide. It participates in amino-acid biosynthesis; L-histidine biosynthesis; L-histidine from 5-phospho-alpha-D-ribose 1-diphosphate: step 4/9. This chain is 1-(5-phosphoribosyl)-5-[(5-phosphoribosylamino)methylideneamino] imidazole-4-carboxamide isomerase, found in Geotalea uraniireducens (strain Rf4) (Geobacter uraniireducens).